The following is a 239-amino-acid chain: DNA oxidative demethylase ALKBH2 (239 aa).

The PCNA-binding motif lies at 3–7 (KFLVR). The disordered stretch occupies residues 11-32 (RDLQGGGEEPAPTGGASGDLKS). Substrate is bound by residues 80-82 (FGK) and 100-102 (YTF). Residues 130 to 235 (TFNFVLVNRY…RVNLTFRKIL (106 aa)) form the Fe2OG dioxygenase domain. Residues Asn-137, Tyr-139, and His-149 each contribute to the 2-oxoglutarate site. Fe cation-binding residues include His-149 and Asp-151. Position 152 (Asp-152) interacts with substrate. 4 residues coordinate 2-oxoglutarate: His-214, Arg-226, Thr-230, and Arg-232. Residue His-214 coordinates Fe cation.

This sequence belongs to the alkB family. Interacts with PCNA homotrimer; this interaction is enhanced during the S-phase of the cell cycle. Interacts with nucleolar proteins NCL, UBTF and NPM1. Interacts with XRCC5-XRCC6 heterodimer. Fe(2+) is required as a cofactor. Detected in liver, testis and kidney (at protein level). Detected in heart and testis.

It is found in the nucleus. The protein resides in the nucleolus. It localises to the nucleoplasm. It catalyses the reaction a methylated nucleobase within DNA + 2-oxoglutarate + O2 = a nucleobase within DNA + formaldehyde + succinate + CO2. The enzyme catalyses an N(1)-methyl-2'-deoxyadenosine in double-stranded DNA + 2-oxoglutarate + O2 = a 2'-deoxyadenosine in double-stranded DNA + formaldehyde + succinate + CO2 + H(+). The catalysed reaction is an N(1)-methyl-2'-deoxyadenosine in single-stranded DNA + 2-oxoglutarate + O2 = a 2'-deoxyadenosine in single-stranded DNA + formaldehyde + succinate + CO2 + H(+). It carries out the reaction an N(3)-methyl-2'-deoxycytidine in double-stranded DNA + 2-oxoglutarate + O2 = a 2'-deoxycytidine in double-stranded DNA + formaldehyde + succinate + CO2 + H(+). It catalyses the reaction an N(3)-methyl-2'-deoxycytidine in single-stranded DNA + 2-oxoglutarate + O2 = a 2'-deoxycytidine in single-stranded DNA + formaldehyde + succinate + CO2 + H(+). The enzyme catalyses a 1,N(6)-etheno-2'-deoxyadenosine in double-stranded DNA + 2-oxoglutarate + O2 + H2O = a 2'-deoxyadenosine in double-stranded DNA + glyoxal + succinate + CO2. The catalysed reaction is a 1,N(6)-etheno-2'-deoxyadenosine in single-stranded DNA + 2-oxoglutarate + O2 + H2O = a 2'-deoxyadenosine in single-stranded DNA + glyoxal + succinate + CO2. It carries out the reaction a 3,N(4)-etheno-2'-deoxycytidine in double-stranded DNA + 2-oxoglutarate + O2 + H2O = a 2'-deoxycytidine in double-stranded DNA + glyoxal + succinate + CO2. It catalyses the reaction a 3,N(4)-etheno-2'-deoxycytidine in single-stranded DNA + 2-oxoglutarate + O2 + H2O = a 2'-deoxycytidine in single-stranded DNA + glyoxal + succinate + CO2. The enzyme catalyses a 1,N(2)-etheno-2'-deoxyguanosine in double-stranded DNA + 2-oxoglutarate + O2 + H2O = a 2'-deoxyguanosine in double-stranded DNA + glyoxal + succinate + CO2. Activated by magnesium ions. Its function is as follows. Dioxygenase that repairs alkylated nucleic acid bases by direct reversal oxidative dealkylation. Can process both double-stranded (ds) and single-stranded (ss) DNA substrates, with a strong preference for dsDNA. Uses molecular oxygen, 2-oxoglutarate and iron as cofactors to oxidize the alkyl groups that are subsequently released as aldehydes, regenerating the undamaged bases. Probes the base pair stability, locates a weakened base pair and flips the damaged base to accommodate the lesion in its active site for efficient catalysis. Repairs monoalkylated bases, specifically N1-methyladenine and N3-methylcytosine, as well as higher order alkyl adducts such as bases modified with exocyclic bridged adducts known as etheno adducts including 1,N6-ethenoadenine, 3,N4-ethenocytosine and 1,N2-ethenoguanine. Acts as a gatekeeper of genomic integrity under alkylation stress. Efficiently repairs alkylated lesions in ribosomal DNA (rDNA). These lesions can cause ss- and dsDNA strand breaks that severely impair rDNA transcription. In a response mechanism to DNA damage, associates with PCNA at replication forks to repair alkylated adducts prior to replication. In Mus musculus (Mouse), this protein is DNA oxidative demethylase ALKBH2 (Alkbh2).